The primary structure comprises 633 residues: Probable potassium transport system protein Kup 2 (633 aa).

The next 12 helical transmembrane spans lie at 18-38, 61-81, 109-129, 145-165, 173-193, 211-231, 255-275, 287-307, 345-365, 371-391, 405-425, and 427-447; these read FLAMTIGAIGVVYGDIGTSPL, LISLMLWTLTIIVTFKYVLFL, LMFMAGILGAALFIGDAMITP, PAFHDYVLPISVGIMVLLFAV, VSIFFGPITLIWFLVLGAAGV, AVTFLWNAGFVGFIVLGAVFL, WFAVVFPALTLNYLGQGALVL, LMFPNWALLPVVLLATAATII, IYLPFVNNALLAGVIVLMFMF, LATAYGISVTGAMVVTTVLAF, ATAVLLPLLVLELFFLGANLF, and IHDGGYVPILIAGTLMTTMWT.

This sequence belongs to the HAK/KUP transporter (TC 2.A.72) family.

The protein resides in the cell inner membrane. The enzyme catalyses K(+)(in) + H(+)(in) = K(+)(out) + H(+)(out). Functionally, transport of potassium into the cell. Likely operates as a K(+):H(+) symporter. The sequence is that of Probable potassium transport system protein Kup 2 from Sinorhizobium medicae (strain WSM419) (Ensifer medicae).